A 679-amino-acid polypeptide reads, in one-letter code: Penicillin-binding protein PbpB (679 aa).

A disordered region spans residues 1–74 (MSRAAPRRAS…STRARRTRQV (74 aa)). Topologically, residues 1 to 90 (MSRAAPRRAS…GASFVFRHRT (90 aa)) are cytoplasmic. Over residues 42–54 (ARQAQEATKSRPA) the composition is skewed to polar residues. A helical transmembrane segment spans residues 91–111 (GNAVILVLMLVAATQLFFLQV). At 112–679 (SHAAGLRAQA…PGPPLVLQAT (568 aa)) the chain is on the extracellular side. The active-site Acyl-ester intermediate is Ser386.

This sequence belongs to the transpeptidase family. As to quaternary structure, interacts with Wag31. Post-translationally, cleaved by Rip1 in response to oxidative stress (H(2)O(2)), prevented by Wag31. Cleavage probably occurs near residues 102-103.

The protein localises to the cell membrane. Its pathway is cell wall biogenesis; peptidoglycan biosynthesis. Functionally, synthesis of cross-linked peptidoglycan from the lipid intermediates. This Mycobacterium tuberculosis (strain ATCC 25618 / H37Rv) protein is Penicillin-binding protein PbpB (pbpB).